The sequence spans 62 residues: Photosystem II reaction center X protein (62 aa).

A helical transmembrane segment spans residues 26–46 (IASFFAAALLIVIPAATFLIF).

This sequence belongs to the PsbX family. Type 2 subfamily. In terms of assembly, PSII consists of a core antenna complex that captures photons, and an electron transfer chain that converts photonic excitation into a charge separation. PSII forms dimeric complexes.

The protein resides in the cellular thylakoid membrane. In terms of biological role, involved in the binding and/or turnover of quinones at the Q(B) site of Photosystem II. The protein is Photosystem II reaction center X protein of Prochlorococcus marinus (strain MIT 9515).